The chain runs to 191 residues: Phosphoheptose isomerase (191 aa).

One can recognise an SIS domain in the interval 37–191; it reads IADSFKQDGK…IIQLIEKEME (155 aa). 52–54 serves as a coordination point for substrate; sequence NGG. The Zn(2+) site is built by H61 and E65. Substrate is bound by residues E65, 93-94, 119-121, S124, and Q172; these read ND and STS. Residues Q172 and H180 each coordinate Zn(2+).

Belongs to the SIS family. GmhA subfamily. In terms of assembly, homotetramer. Requires Zn(2+) as cofactor.

The protein resides in the cytoplasm. The catalysed reaction is 2 D-sedoheptulose 7-phosphate = D-glycero-alpha-D-manno-heptose 7-phosphate + D-glycero-beta-D-manno-heptose 7-phosphate. It functions in the pathway carbohydrate biosynthesis; D-glycero-D-manno-heptose 7-phosphate biosynthesis; D-glycero-alpha-D-manno-heptose 7-phosphate and D-glycero-beta-D-manno-heptose 7-phosphate from sedoheptulose 7-phosphate: step 1/1. The protein operates within bacterial outer membrane biogenesis; LPS core biosynthesis. In terms of biological role, catalyzes the isomerization of sedoheptulose 7-phosphate in D-glycero-D-manno-heptose 7-phosphate. This chain is Phosphoheptose isomerase, found in Vibrio parahaemolyticus serotype O3:K6 (strain RIMD 2210633).